Here is a 313-residue protein sequence, read N- to C-terminus: Pyrimidine-specific ribonucleoside hydrolase RihB (313 aa).

The active-site Proton acceptor is Asp11. 3 residues coordinate Ca(2+): Asp11, Asp16, and Val124. Residues Gln227 and His239 each contribute to the substrate site. Ca(2+) is bound at residue Asp240.

Belongs to the IUNH family. RihB subfamily. In terms of assembly, homotetramer. It depends on Ca(2+) as a cofactor.

The catalysed reaction is a pyrimidine ribonucleoside + H2O = a pyrimidine nucleobase + D-ribose. In terms of biological role, hydrolyzes cytidine or uridine to ribose and cytosine or uracil, respectively. Has a clear preference for cytidine over uridine. Strictly specific for ribonucleosides. The protein is Pyrimidine-specific ribonucleoside hydrolase RihB of Escherichia coli O17:K52:H18 (strain UMN026 / ExPEC).